We begin with the raw amino-acid sequence, 578 residues long: Proline--tRNA ligase (578 aa).

It belongs to the class-II aminoacyl-tRNA synthetase family. ProS type 1 subfamily. In terms of assembly, homodimer.

The protein localises to the cytoplasm. It carries out the reaction tRNA(Pro) + L-proline + ATP = L-prolyl-tRNA(Pro) + AMP + diphosphate. In terms of biological role, catalyzes the attachment of proline to tRNA(Pro) in a two-step reaction: proline is first activated by ATP to form Pro-AMP and then transferred to the acceptor end of tRNA(Pro). As ProRS can inadvertently accommodate and process non-cognate amino acids such as alanine and cysteine, to avoid such errors it has two additional distinct editing activities against alanine. One activity is designated as 'pretransfer' editing and involves the tRNA(Pro)-independent hydrolysis of activated Ala-AMP. The other activity is designated 'posttransfer' editing and involves deacylation of mischarged Ala-tRNA(Pro). The misacylated Cys-tRNA(Pro) is not edited by ProRS. This is Proline--tRNA ligase from Burkholderia pseudomallei (strain K96243).